The chain runs to 130 residues: Fluoride-specific ion channel FluC (130 aa).

Transmembrane regions (helical) follow at residues 9-29 (LAII…TIFL), 39-59 (YATF…VTLA), 71-91 (LLLA…ALEV), and 104-124 (VLYG…GSLI). Na(+) contacts are provided by glycine 79 and threonine 82.

It belongs to the fluoride channel Fluc/FEX (TC 1.A.43) family.

It localises to the cell inner membrane. The enzyme catalyses fluoride(in) = fluoride(out). Na(+) is not transported, but it plays an essential structural role and its presence is essential for fluoride channel function. Its function is as follows. Fluoride-specific ion channel. Important for reducing fluoride concentration in the cell, thus reducing its toxicity. The sequence is that of Fluoride-specific ion channel FluC from Synechocystis sp. (strain ATCC 27184 / PCC 6803 / Kazusa).